We begin with the raw amino-acid sequence, 254 residues long: Diphthine synthase (254 aa).

S-adenosyl-L-methionine is bound by residues L11, D87, I90, 115–116 (SV), L167, L208, and H233.

This sequence belongs to the diphthine synthase family. Homodimer.

It carries out the reaction 2-[(3S)-amino-3-carboxypropyl]-L-histidyl-[translation elongation factor 2] + 3 S-adenosyl-L-methionine = diphthine-[translation elongation factor 2] + 3 S-adenosyl-L-homocysteine + 3 H(+). The protein operates within protein modification; peptidyl-diphthamide biosynthesis. Functionally, S-adenosyl-L-methionine-dependent methyltransferase that catalyzes the trimethylation of the amino group of the modified target histidine residue in translation elongation factor 2 (EF-2), to form an intermediate called diphthine. The three successive methylation reactions represent the second step of diphthamide biosynthesis. In Metallosphaera sedula (strain ATCC 51363 / DSM 5348 / JCM 9185 / NBRC 15509 / TH2), this protein is Diphthine synthase.